We begin with the raw amino-acid sequence, 113 residues long: MSELDSQVPTAFDPFADANAEDSGAGTKEYVHIRVQQRNGRKSLTTVQGLKKEYSYTKILKDLKKEFCCNGTVVQDSELGQVIQLQGDQRKNVSTFLVQAGLVKKDNIKIHGF.

Residues 1–24 are disordered; sequence MSELDSQVPTAFDPFADANAEDSG. Ser2 bears the N-acetylserine mark.

It belongs to the SUI1 family.

In terms of biological role, probably involved in translation. The polypeptide is Protein translation factor SUI1 homolog 1 (Arabidopsis thaliana (Mouse-ear cress)).